The sequence spans 349 residues: Aldehyde reductase YahK (349 aa).

Zn(2+) is bound by residues Cys-40, His-62, Cys-93, Cys-96, Cys-99, Cys-107, and Cys-158.

Belongs to the zinc-containing alcohol dehydrogenase family. It depends on Zn(2+) as a cofactor.

The catalysed reaction is a primary alcohol + NADP(+) = an aldehyde + NADPH + H(+). Functionally, catalyzes the reduction of a wide range of aldehydes into their corresponding alcohols. Has a strong preference for NADPH over NADH as the electron donor. Cannot use a ketone as substrate. Is a major source of NADPH-dependent aldehyde reductase activity in E.coli. The in vivo functions of YahK has yet to be determined. This chain is Aldehyde reductase YahK (yahK), found in Escherichia coli (strain K12).